Reading from the N-terminus, the 202-residue chain is 3-isopropylmalate dehydratase small subunit (202 aa).

It belongs to the LeuD family. LeuD type 1 subfamily. As to quaternary structure, heterodimer of LeuC and LeuD.

The enzyme catalyses (2R,3S)-3-isopropylmalate = (2S)-2-isopropylmalate. The protein operates within amino-acid biosynthesis; L-leucine biosynthesis; L-leucine from 3-methyl-2-oxobutanoate: step 2/4. Its function is as follows. Catalyzes the isomerization between 2-isopropylmalate and 3-isopropylmalate, via the formation of 2-isopropylmaleate. The polypeptide is 3-isopropylmalate dehydratase small subunit (Nocardioides sp. (strain ATCC BAA-499 / JS614)).